A 537-amino-acid polypeptide reads, in one-letter code: CTP synthase (537 aa).

The segment at 1-265 (MTKFIFVTGG…GKYLVKRLGL (265 aa)) is amidoligase domain. Serine 13 lines the CTP pocket. Serine 13 is a binding site for UTP. 14 to 19 (GLGKGI) contacts ATP. Residue tyrosine 54 participates in L-glutamine binding. Aspartate 71 contacts ATP. Mg(2+)-binding residues include aspartate 71 and glutamate 139. CTP-binding positions include 146 to 148 (DIE), 186 to 191 (KTKPTQ), and lysine 222. UTP is bound by residues 186–191 (KTKPTQ) and lysine 222. One can recognise a Glutamine amidotransferase type-1 domain in the interval 290 to 532 (EIAIVGKYVK…VKAAKEYKQE (243 aa)). An L-glutamine-binding site is contributed by glycine 351. The active-site Nucleophile; for glutamine hydrolysis is the cysteine 378. Residues 379-382 (FGFQ), glutamate 402, and arginine 459 each bind L-glutamine. Catalysis depends on residues histidine 505 and glutamate 507.

The protein belongs to the CTP synthase family. As to quaternary structure, homotetramer.

It catalyses the reaction UTP + L-glutamine + ATP + H2O = CTP + L-glutamate + ADP + phosphate + 2 H(+). It carries out the reaction L-glutamine + H2O = L-glutamate + NH4(+). The catalysed reaction is UTP + NH4(+) + ATP = CTP + ADP + phosphate + 2 H(+). Its pathway is pyrimidine metabolism; CTP biosynthesis via de novo pathway; CTP from UDP: step 2/2. With respect to regulation, allosterically activated by GTP, when glutamine is the substrate; GTP has no effect on the reaction when ammonia is the substrate. The allosteric effector GTP functions by stabilizing the protein conformation that binds the tetrahedral intermediate(s) formed during glutamine hydrolysis. Inhibited by the product CTP, via allosteric rather than competitive inhibition. Its function is as follows. Catalyzes the ATP-dependent amination of UTP to CTP with either L-glutamine or ammonia as the source of nitrogen. Regulates intracellular CTP levels through interactions with the four ribonucleotide triphosphates. The polypeptide is CTP synthase (Pyrococcus abyssi (strain GE5 / Orsay)).